The chain runs to 460 residues: V-type ATP synthase beta chain (460 aa).

Belongs to the ATPase alpha/beta chains family.

Produces ATP from ADP in the presence of a proton gradient across the membrane. The V-type beta chain is a regulatory subunit. In Dictyoglomus turgidum (strain DSM 6724 / Z-1310), this protein is V-type ATP synthase beta chain.